Consider the following 135-residue polypeptide: Small ribosomal subunit protein bS6 (135 aa).

Residues 98-135 (EASPMAKAKDERDARRAAISERSSEADEVEENAEESAE) are disordered. Basic and acidic residues predominate over residues 104–122 (KAKDERDARRAAISERSSE). Residues 123-135 (ADEVEENAEESAE) show a composition bias toward acidic residues.

The protein belongs to the bacterial ribosomal protein bS6 family.

Binds together with bS18 to 16S ribosomal RNA. The protein is Small ribosomal subunit protein bS6 of Shewanella amazonensis (strain ATCC BAA-1098 / SB2B).